A 318-amino-acid chain; its full sequence is Ribonuclease Z (318 aa).

Zn(2+) is bound by residues histidine 63, histidine 65, aspartate 67, histidine 68, histidine 142, aspartate 210, and histidine 268. The active-site Proton acceptor is the aspartate 67.

The protein belongs to the RNase Z family. Homodimer. Requires Zn(2+) as cofactor.

It carries out the reaction Endonucleolytic cleavage of RNA, removing extra 3' nucleotides from tRNA precursor, generating 3' termini of tRNAs. A 3'-hydroxy group is left at the tRNA terminus and a 5'-phosphoryl group is left at the trailer molecule.. Zinc phosphodiesterase, which displays some tRNA 3'-processing endonuclease activity. Probably involved in tRNA maturation, by removing a 3'-trailer from precursor tRNA. The protein is Ribonuclease Z of Thermobifida fusca (strain YX).